The sequence spans 446 residues: Tol-Pal system protein TolB (446 aa).

A signal peptide spans methionine 1–alanine 24.

It belongs to the TolB family. The Tol-Pal system is composed of five core proteins: the inner membrane proteins TolA, TolQ and TolR, the periplasmic protein TolB and the outer membrane protein Pal. They form a network linking the inner and outer membranes and the peptidoglycan layer.

Its subcellular location is the periplasm. Part of the Tol-Pal system, which plays a role in outer membrane invagination during cell division and is important for maintaining outer membrane integrity. This Dinoroseobacter shibae (strain DSM 16493 / NCIMB 14021 / DFL 12) protein is Tol-Pal system protein TolB.